The chain runs to 303 residues: tRNA (guanine-N(7)-)-methyltransferase (303 aa).

The disordered stretch occupies residues 1–64 (MPKPHQVQVI…STSDKISLPR (64 aa)). Over residues 10-38 (IKDRETQLREQQEAESKRRTYRDVKEETR) the composition is skewed to basic and acidic residues. S-adenosyl-L-methionine contacts are provided by residues G118, 141–142 (EI), 177–178 (NA), and C197. The active site involves D200. 275–277 (TEE) lines the S-adenosyl-L-methionine pocket.

It belongs to the class I-like SAM-binding methyltransferase superfamily. TrmB family. In terms of assembly, forms a complex with TRM82.

The protein resides in the nucleus. It catalyses the reaction guanosine(46) in tRNA + S-adenosyl-L-methionine = N(7)-methylguanosine(46) in tRNA + S-adenosyl-L-homocysteine. It functions in the pathway tRNA modification; N(7)-methylguanine-tRNA biosynthesis. Functionally, catalyzes the formation of N(7)-methylguanine at position 46 (m7G46) in tRNA. In Scheffersomyces stipitis (strain ATCC 58785 / CBS 6054 / NBRC 10063 / NRRL Y-11545) (Yeast), this protein is tRNA (guanine-N(7)-)-methyltransferase.